The following is a 471-amino-acid chain: Uronate isomerase (471 aa).

This sequence belongs to the metallo-dependent hydrolases superfamily. Uronate isomerase family.

The catalysed reaction is D-glucuronate = D-fructuronate. It carries out the reaction aldehydo-D-galacturonate = keto-D-tagaturonate. It participates in carbohydrate metabolism; pentose and glucuronate interconversion. This is Uronate isomerase from Cellvibrio japonicus (strain Ueda107) (Pseudomonas fluorescens subsp. cellulosa).